Reading from the N-terminus, the 892-residue chain is Alanine--tRNA ligase (892 aa).

Zn(2+) is bound by residues His-577, His-581, Cys-680, and His-684.

This sequence belongs to the class-II aminoacyl-tRNA synthetase family. Zn(2+) serves as cofactor.

The protein localises to the cytoplasm. The catalysed reaction is tRNA(Ala) + L-alanine + ATP = L-alanyl-tRNA(Ala) + AMP + diphosphate. Functionally, catalyzes the attachment of alanine to tRNA(Ala) in a two-step reaction: alanine is first activated by ATP to form Ala-AMP and then transferred to the acceptor end of tRNA(Ala). Also edits incorrectly charged Ser-tRNA(Ala) and Gly-tRNA(Ala) via its editing domain. This is Alanine--tRNA ligase from Paenarthrobacter aurescens (strain TC1).